The chain runs to 304 residues: Homoserine kinase (304 aa).

90-100 is a binding site for ATP; it reads PLARGLGSSAS.

This sequence belongs to the GHMP kinase family. Homoserine kinase subfamily.

The protein resides in the cytoplasm. It carries out the reaction L-homoserine + ATP = O-phospho-L-homoserine + ADP + H(+). The protein operates within amino-acid biosynthesis; L-threonine biosynthesis; L-threonine from L-aspartate: step 4/5. Functionally, catalyzes the ATP-dependent phosphorylation of L-homoserine to L-homoserine phosphate. The polypeptide is Homoserine kinase (Staphylococcus aureus (strain bovine RF122 / ET3-1)).